Consider the following 153-residue polypeptide: Actin-related protein 2/3 complex subunit 5-like protein (153 aa).

Ser-64 bears the Phosphoserine mark.

This sequence belongs to the ARPC5 family. In terms of assembly, may be a component of the Arp2/3 complex in which it may replace ARPC5.

The protein localises to the cytoplasm. It is found in the cytoskeleton. May function as component of the Arp2/3 complex which is involved in regulation of actin polymerization and together with an activating nucleation-promoting factor (NPF) mediates the formation of branched actin networks. In Mus musculus (Mouse), this protein is Actin-related protein 2/3 complex subunit 5-like protein (Arpc5l).